Reading from the N-terminus, the 612-residue chain is Calcium-dependent protein kinase 27 (612 aa).

Glycine 2 is lipidated: N-myristoyl glycine. Residues 23–132 form a disordered region; sequence PRHAAPSSPS…AHIKRISSAG (110 aa). Positions 28-50 are enriched in low complexity; sequence PSSPSQPTTTSRSIPVVLPSAPS. Residues 51–100 show a composition bias toward pro residues; sequence SKPPPPTQTAPPVPVVISEPPPPQPQPEPQPAAPSQPPPPQEQPSPPPPA. Positions 117–127 are enriched in basic residues; the sequence is SRAKKPAHIKR. One can recognise a Protein kinase domain in the interval 150-408; sequence YSLGRKLGQG…AHEVLCHPWL (259 aa). ATP is bound by residues 156–164 and lysine 179; that span reads LGQGQFGTT. Residue aspartate 274 is the Proton acceptor of the active site. The autoinhibitory domain stretch occupies residues 414-444; sequence APDKPLDSAVLSRLRQFSAMNKLKKMALRVI. EF-hand domains follow at residues 451-486, 487-522, 523-558, and 561-592; these read EEIAGLKEMFKMMDTDNSGQINYEELKAGLERVGAN, MKESEIYQLMQAADIDNSGTIDYGEFIAATLHLNKV, EREDHLYAAFQYFDKDGSGYITSDELQQACDEFGIE, and RLEDMIGEVDQDNDGRIDYNEFVAMMQKTTTG. The Ca(2+) site is built by aspartate 464, aspartate 466, serine 468, glutamine 470, glutamate 475, aspartate 500, aspartate 502, serine 504, threonine 506, glutamate 511, aspartate 536, aspartate 538, serine 540, tyrosine 542, glutamate 547, aspartate 570, aspartate 572, aspartate 574, arginine 576, and glutamate 581.

Belongs to the protein kinase superfamily. Ser/Thr protein kinase family. CDPK subfamily.

The protein localises to the membrane. The enzyme catalyses L-seryl-[protein] + ATP = O-phospho-L-seryl-[protein] + ADP + H(+). It carries out the reaction L-threonyl-[protein] + ATP = O-phospho-L-threonyl-[protein] + ADP + H(+). Its activity is regulated as follows. Activated by calcium. Autophosphorylation may play an important role in the regulation of the kinase activity. May play a role in signal transduction pathways that involve calcium as a second messenger. The protein is Calcium-dependent protein kinase 27 of Oryza sativa subsp. japonica (Rice).